The sequence spans 249 residues: 2,3-bisphosphoglycerate-dependent phosphoglycerate mutase (249 aa).

Substrate contacts are provided by residues 9–16 (RHGQSQWN), 22–23 (TG), arginine 61, 88–91 (ERHY), lysine 99, 115–116 (RR), and 184–185 (GN). Residue histidine 10 is the Tele-phosphohistidine intermediate of the active site. The active-site Proton donor/acceptor is the glutamate 88.

Belongs to the phosphoglycerate mutase family. BPG-dependent PGAM subfamily. In terms of assembly, homodimer.

The catalysed reaction is (2R)-2-phosphoglycerate = (2R)-3-phosphoglycerate. The protein operates within carbohydrate degradation; glycolysis; pyruvate from D-glyceraldehyde 3-phosphate: step 3/5. Functionally, catalyzes the interconversion of 2-phosphoglycerate and 3-phosphoglycerate. In Xanthomonas euvesicatoria pv. vesicatoria (strain 85-10) (Xanthomonas campestris pv. vesicatoria), this protein is 2,3-bisphosphoglycerate-dependent phosphoglycerate mutase.